A 494-amino-acid polypeptide reads, in one-letter code: UPF0371 protein SPG_0310 (494 aa).

It belongs to the UPF0371 family.

The sequence is that of UPF0371 protein SPG_0310 from Streptococcus pneumoniae serotype 19F (strain G54).